The primary structure comprises 300 residues: Actin-related protein 2/3 complex subunit 2 (300 aa).

N6-acetyllysine is present on residues Lys275 and Lys295.

Belongs to the ARPC2 family. As to quaternary structure, component of the Arp2/3 complex composed of ACTR2/ARP2, ACTR3/ARP3, ARPC1B/p41-ARC, ARPC2/p34-ARC, ARPC3/p21-ARC, ARPC4/p20-ARC and ARPC5/p16-ARC. Interacts with SHANK3; the interaction probably mediates the association of SHANK3 with the Arp2/3 complex.

It is found in the cytoplasm. The protein localises to the cytoskeleton. The protein resides in the cell projection. Its subcellular location is the synapse. It localises to the synaptosome. It is found in the nucleus. Its function is as follows. Actin-binding component of the Arp2/3 complex, a multiprotein complex that mediates actin polymerization upon stimulation by nucleation-promoting factor (NPF). The Arp2/3 complex mediates the formation of branched actin networks in the cytoplasm, providing the force for cell motility. Seems to contact the mother actin filament. In addition to its role in the cytoplasmic cytoskeleton, the Arp2/3 complex also promotes actin polymerization in the nucleus, thereby regulating gene transcription and repair of damaged DNA. The Arp2/3 complex promotes homologous recombination (HR) repair in response to DNA damage by promoting nuclear actin polymerization, leading to drive motility of double-strand breaks (DSBs). The polypeptide is Actin-related protein 2/3 complex subunit 2 (Rattus norvegicus (Rat)).